Here is a 1030-residue protein sequence, read N- to C-terminus: ADAMTS-like protein 4 (1030 aa).

A signal peptide spans 1–24; sequence MELWLGRLWLYVMLLLLLLQLCQD. Residues 47-91 form the TSP type-1 1 domain; that stretch reads GPWGRWASCSQPCGVGVQRRSRTCELHPALSLPPRPPRHPEAPQP. 2 disordered regions span residues 73–150 and 168–306; these read HPAL…KPGM and LAHK…LPLT. Polar residues-rich tracts occupy residues 176-186, 211-237, and 245-257; these read KDSSTAEETLP, QSRS…SSAP, and PTSS…SFQG. 2 N-linked (GlcNAc...) asparagine glycosylation sites follow: Asn451 and Asn731. 5 TSP type-1 domains span residues 681-740, 741-800, 803-865, 866-925, and 926-982; these read CPPY…QLRL, CGHW…GPCT, WFYS…GPCE, KTWR…QGQA, and CEDQ…QPCN. The PLAC domain occupies 985 to 1022; that stretch reads PDDQCKDSSPHCPLVVQARLCVYPYYTATCCRSCAHVL.

As to quaternary structure, interacts with CTSB. Interacts with FBN1. In terms of processing, glycosylated. Can be O-fucosylated by POFUT2 on a serine or a threonine residue found within the consensus sequence C1-X(2)-(S/T)-C2-G of the TSP type-1 repeat domains where C1 and C2 are the first and second cysteine residue of the repeat, respectively. Fucosylated repeats can then be further glycosylated by the addition of a beta-1,3-glucose residue by the glucosyltransferase, B3GALTL. Fucosylation mediates the efficient secretion of ADAMTS family members. Can also be C-glycosylated with one or two mannose molecules on tryptophan residues within the consensus sequence W-X-X-W of the TPRs, and N-glycosylated. These other glycosylations can also facilitate secretion.

The protein localises to the secreted. The protein resides in the extracellular space. It localises to the extracellular matrix. Its function is as follows. Positive regulation of apoptosis. May facilitate FBN1 microfibril biogenesis. The chain is ADAMTS-like protein 4 from Rattus norvegicus (Rat).